Reading from the N-terminus, the 433-residue chain is Homoserine dehydrogenase (433 aa).

3 residues coordinate NADPH: Thr-12, Val-13, and Lys-102. Position 13 (Val-13) interacts with NAD(+). Val-13 and Lys-102 together coordinate NADP(+). Glu-126, Val-129, Gly-131, and Ile-133 together coordinate Na(+). Positions 184 and 187 each coordinate NADP(+). 2 residues coordinate L-homoserine: Glu-187 and Asp-198. Lys-202 acts as the Proton donor in catalysis. Gly-303 contacts NADPH. Position 303 (Gly-303) interacts with NAD(+). Gly-303 provides a ligand contact to NADP(+). Residues 356-433 (YCRFLCADVP…EIPSVIRVLS (78 aa)) enclose the ACT domain.

This sequence belongs to the homoserine dehydrogenase family. A metal cation serves as cofactor.

It catalyses the reaction L-homoserine + NADP(+) = L-aspartate 4-semialdehyde + NADPH + H(+). The catalysed reaction is L-homoserine + NAD(+) = L-aspartate 4-semialdehyde + NADH + H(+). Its pathway is amino-acid biosynthesis; L-methionine biosynthesis via de novo pathway; L-homoserine from L-aspartate: step 3/3. It participates in amino-acid biosynthesis; L-threonine biosynthesis; L-threonine from L-aspartate: step 3/5. Its function is as follows. Catalyzes the conversion of L-aspartate-beta-semialdehyde (L-Asa) to L-homoserine (L-Hse), the third step in the biosynthesis of threonine and methionine from aspartate. This chain is Homoserine dehydrogenase (hom), found in Synechocystis sp. (strain ATCC 27184 / PCC 6803 / Kazusa).